Consider the following 342-residue polypeptide: Heparan sulfate glucosamine 3-O-sulfotransferase 6 (342 aa).

Residues 1-31 (MAGSGGLGGGAGDLQGAGTGQGTALRALRAP) lie on the Cytoplasmic side of the membrane. The helical; Signal-anchor for type II membrane protein transmembrane segment at 32–49 (LALVVLLLSAYCLFALPG) threads the bilayer. The Lumenal segment spans residues 50 to 342 (RCPPAARAPA…QMTGQDFGWD (293 aa)). The segment at 56 to 75 (RAPAPVPAPAEPPHTSLRLR) is disordered. 100–104 (KGGTR) is a binding site for 3'-phosphoadenylyl sulfate. Substrate-binding positions include 122 to 128 (EPHFFDR) and 153 to 156 (KTPS). 2 residues coordinate 3'-phosphoadenylyl sulfate: Arg-181 and Ser-189. 220-221 (WS) is a binding site for substrate. Residue Asn-281 is glycosylated (N-linked (GlcNAc...) asparagine). The cysteines at positions 288 and 300 are disulfide-linked. 305–309 (KGRPH) contributes to the 3'-phosphoadenylyl sulfate binding site.

The protein belongs to the sulfotransferase 1 family. Expressed in liver and kidney, followed by heart, brain, lung and testis.

The protein localises to the golgi apparatus membrane. The catalysed reaction is alpha-D-glucosaminyl-[heparan sulfate](n) + 3'-phosphoadenylyl sulfate = 3-sulfo-alpha-D-glucosaminyl-[heparan sulfate](n) + adenosine 3',5'-bisphosphate + H(+). Sulfotransferase that utilizes 3'-phospho-5'-adenylyl sulfate (PAPS) to catalyze the transfer of a sulfo group to heparan sulfate. Unlike 3-OST-1, does not convert non-anticoagulant heparan sulfate to anticoagulant heparan sulfate. This chain is Heparan sulfate glucosamine 3-O-sulfotransferase 6 (Hs3st6), found in Mus musculus (Mouse).